The following is a 67-amino-acid chain: Large ribosomal subunit protein bL35 (67 aa).

Belongs to the bacterial ribosomal protein bL35 family.

This Rhizorhabdus wittichii (strain DSM 6014 / CCUG 31198 / JCM 15750 / NBRC 105917 / EY 4224 / RW1) (Sphingomonas wittichii) protein is Large ribosomal subunit protein bL35.